A 432-amino-acid chain; its full sequence is MAPGREGELDRDFRVLMSLAHGFMVSQVLFAALDLGIFDLAAQGPVAAEAVAQTGGWSPRGTQLLMDACTRLGLLRGAGDGSYTNSALSSTFLVSGSPQSQRCMLLYLAGTTYGCWAHLAAGVREGRNQYSRAVGISAEDPFSAIYRSEPERLLFMRGLQETWSLCGGRVLTAFDLSRFRVICDLGGGSGALAQEAARLYPGSSVCVFDLPDVIAAARTHFLSPGARPSVRFVAGDFFRSRLPRADLFILARVLHDWADGACVELLGRLHRACRPGGALLLVEAVLAKGGAGPLRSLLLSLNMMLQAEGWERQASDYRNLATRAGFPRLQLRRPGGPYHAMLARRGPRPGIITGVGSNTTGTGSFVTGIRRDVPGARSDAAGTGSGTGNTGSGIMLQGETLESEVSAPQAGSDVGGAGNEPRSGTLKQGDWK.

S-adenosyl-L-methionine-binding positions include tyrosine 146, tryptophan 163, aspartate 209, 235–237 (GDF), and arginine 252. Histidine 255 serves as the catalytic Proton donor/acceptor. Substrate is bound by residues aspartate 256, asparagine 302, and glutamine 306. The tract at residues 373–432 (VPGARSDAAGTGSGTGNTGSGIMLQGETLESEVSAPQAGSDVGGAGNEPRSGTLKQGDWK) is disordered.

This sequence belongs to the class I-like SAM-binding methyltransferase superfamily. Cation-independent O-methyltransferase family. As to quaternary structure, homodimer. In terms of tissue distribution, expressed predominantly in the pineal gland (at protein level). Very low expression, if any, in the retina.

The enzyme catalyses N-acetylserotonin + S-adenosyl-L-methionine = melatonin + S-adenosyl-L-homocysteine + H(+). Its pathway is aromatic compound metabolism; melatonin biosynthesis; melatonin from serotonin: step 1/2. In terms of biological role, catalyzes the transfer of a methyl group onto N-acetylserotonin, producing melatonin (N-acetyl-5-methoxytryptamine). The polypeptide is Acetylserotonin O-methyltransferase (Asmt) (Rattus norvegicus (Rat)).